A 424-amino-acid polypeptide reads, in one-letter code: Serine hydroxymethyltransferase (424 aa).

(6S)-5,6,7,8-tetrahydrofolate contacts are provided by residues leucine 113 and 117–119 (GHL). At lysine 222 the chain carries N6-(pyridoxal phosphate)lysine. 361–363 (SPF) contributes to the (6S)-5,6,7,8-tetrahydrofolate binding site.

This sequence belongs to the SHMT family. Homodimer. Pyridoxal 5'-phosphate is required as a cofactor.

Its subcellular location is the cytoplasm. The catalysed reaction is (6R)-5,10-methylene-5,6,7,8-tetrahydrofolate + glycine + H2O = (6S)-5,6,7,8-tetrahydrofolate + L-serine. It participates in one-carbon metabolism; tetrahydrofolate interconversion. It functions in the pathway amino-acid biosynthesis; glycine biosynthesis; glycine from L-serine: step 1/1. Functionally, catalyzes the reversible interconversion of serine and glycine with tetrahydrofolate (THF) serving as the one-carbon carrier. This reaction serves as the major source of one-carbon groups required for the biosynthesis of purines, thymidylate, methionine, and other important biomolecules. Also exhibits THF-independent aldolase activity toward beta-hydroxyamino acids, producing glycine and aldehydes, via a retro-aldol mechanism. In Flavobacterium psychrophilum (strain ATCC 49511 / DSM 21280 / CIP 103535 / JIP02/86), this protein is Serine hydroxymethyltransferase.